The chain runs to 122 residues: Small ribosomal subunit protein uS13 (122 aa).

A compositionally biased stretch (basic residues) spans 97–114; it reads PVRGQRTHTNAKTRKGKS. Residues 97–122 form a disordered region; that stretch reads PVRGQRTHTNAKTRKGKSRLPIAGKE.

This sequence belongs to the universal ribosomal protein uS13 family. As to quaternary structure, part of the 30S ribosomal subunit. Forms a loose heterodimer with protein S19. Forms two bridges to the 50S subunit in the 70S ribosome.

Functionally, located at the top of the head of the 30S subunit, it contacts several helices of the 16S rRNA. In the 70S ribosome it contacts the 23S rRNA (bridge B1a) and protein L5 of the 50S subunit (bridge B1b), connecting the 2 subunits; these bridges are implicated in subunit movement. Contacts the tRNAs in the A and P-sites. The polypeptide is Small ribosomal subunit protein uS13 (Wolbachia sp. subsp. Brugia malayi (strain TRS)).